The following is a 130-amino-acid chain: Albumin-1 D (130 aa).

Positions 1-26 (MASVKLASLIVLFATLGMFLTKNVGA) are cleaved as a signal peptide. 3 disulfide bridges follow: C29–C46, C33–C48, and C41–C58. 2 consecutive propeptides follow at residues 64–69 (VFLKAN) and 123–130 (LLKSVSTA).

The C-terminal glycine may be removed from PA1b. In terms of tissue distribution, major component of both the cotyledons and embryonic axes of mature seeds.

Functionally, PA1b binds to basic 7S globulin (BG) and stimulates its phosphorylation activity. Involved in the signal transduction system to regulate the growth and differentiation as a hormone peptide. Toxic to various insects through binding to a high affinity binding site in the insect gut. The chain is Albumin-1 D from Pisum sativum (Garden pea).